The chain runs to 554 residues: CTP synthase (554 aa).

Residues 1–265 form an amidoligase domain region; sequence MTPLIFVTGG…DELVIDQFKL (265 aa). Ser-13 contacts CTP. UTP is bound at residue Ser-13. Residues 14-19 and Asp-71 each bind ATP; that span reads SLGKGI. Residues Asp-71 and Glu-139 each contribute to the Mg(2+) site. Residues 146-148, 186-191, and Lys-222 contribute to the CTP site; these read DIE and KTKPTQ. UTP contacts are provided by residues 186-191 and Lys-222; that span reads KTKPTQ. The Glutamine amidotransferase type-1 domain maps to 292 to 545; sequence TIAVVGKYVD…VRAAREKKAG (254 aa). Position 353 (Gly-353) interacts with L-glutamine. Residue Cys-380 is the Nucleophile; for glutamine hydrolysis of the active site. Residues 381–384, Glu-404, and Arg-471 each bind L-glutamine; that span reads YGMQ. Residues His-518 and Glu-520 contribute to the active site.

This sequence belongs to the CTP synthase family. As to quaternary structure, homotetramer.

The enzyme catalyses UTP + L-glutamine + ATP + H2O = CTP + L-glutamate + ADP + phosphate + 2 H(+). It carries out the reaction L-glutamine + H2O = L-glutamate + NH4(+). The catalysed reaction is UTP + NH4(+) + ATP = CTP + ADP + phosphate + 2 H(+). Its pathway is pyrimidine metabolism; CTP biosynthesis via de novo pathway; CTP from UDP: step 2/2. Its activity is regulated as follows. Allosterically activated by GTP, when glutamine is the substrate; GTP has no effect on the reaction when ammonia is the substrate. The allosteric effector GTP functions by stabilizing the protein conformation that binds the tetrahedral intermediate(s) formed during glutamine hydrolysis. Inhibited by the product CTP, via allosteric rather than competitive inhibition. Catalyzes the ATP-dependent amination of UTP to CTP with either L-glutamine or ammonia as the source of nitrogen. Regulates intracellular CTP levels through interactions with the four ribonucleotide triphosphates. The polypeptide is CTP synthase (Xanthomonas campestris pv. campestris (strain 8004)).